The sequence spans 230 residues: Dephospho-CoA kinase (230 aa).

Residues 1–20 (MSKYAAIPSPYSHQPQAPDH) are disordered. Residues 26-225 (VVGLTGGIGS…QDYLKLAQQL (200 aa)) form the DPCK domain. 34–39 (GSGKSA) lines the ATP pocket.

The protein belongs to the CoaE family.

The protein resides in the cytoplasm. It catalyses the reaction 3'-dephospho-CoA + ATP = ADP + CoA + H(+). It participates in cofactor biosynthesis; coenzyme A biosynthesis; CoA from (R)-pantothenate: step 5/5. Functionally, catalyzes the phosphorylation of the 3'-hydroxyl group of dephosphocoenzyme A to form coenzyme A. In Psychrobacter arcticus (strain DSM 17307 / VKM B-2377 / 273-4), this protein is Dephospho-CoA kinase.